We begin with the raw amino-acid sequence, 610 residues long: Glutamine--fructose-6-phosphate aminotransferase [isomerizing] (610 aa).

The active-site Nucleophile; for GATase activity is Cys2. Positions 2-218 (CGIVGAVAQR…EGDVAEMTRR (217 aa)) constitute a Glutamine amidotransferase type-2 domain. 2 SIS domains span residues 286 to 426 (AAEI…QQQR) and 459 to 600 (LAED…VDQP). Catalysis depends on Lys605, which acts as the For Fru-6P isomerization activity.

Homodimer.

The protein localises to the cytoplasm. The enzyme catalyses D-fructose 6-phosphate + L-glutamine = D-glucosamine 6-phosphate + L-glutamate. Catalyzes the first step in hexosamine metabolism, converting fructose-6P into glucosamine-6P using glutamine as a nitrogen source. The polypeptide is Glutamine--fructose-6-phosphate aminotransferase [isomerizing] (Vibrio cholerae serotype O1 (strain ATCC 39315 / El Tor Inaba N16961)).